Reading from the N-terminus, the 212-residue chain is Imidazole glycerol phosphate synthase subunit HisH (212 aa).

One can recognise a Glutamine amidotransferase type-1 domain in the interval Met-1–Ala-212. Residue Cys-79 is the Nucleophile of the active site. Catalysis depends on residues His-187 and Glu-189.

As to quaternary structure, heterodimer of HisH and HisF.

It localises to the cytoplasm. The enzyme catalyses 5-[(5-phospho-1-deoxy-D-ribulos-1-ylimino)methylamino]-1-(5-phospho-beta-D-ribosyl)imidazole-4-carboxamide + L-glutamine = D-erythro-1-(imidazol-4-yl)glycerol 3-phosphate + 5-amino-1-(5-phospho-beta-D-ribosyl)imidazole-4-carboxamide + L-glutamate + H(+). It carries out the reaction L-glutamine + H2O = L-glutamate + NH4(+). The protein operates within amino-acid biosynthesis; L-histidine biosynthesis; L-histidine from 5-phospho-alpha-D-ribose 1-diphosphate: step 5/9. In terms of biological role, IGPS catalyzes the conversion of PRFAR and glutamine to IGP, AICAR and glutamate. The HisH subunit catalyzes the hydrolysis of glutamine to glutamate and ammonia as part of the synthesis of IGP and AICAR. The resulting ammonia molecule is channeled to the active site of HisF. The protein is Imidazole glycerol phosphate synthase subunit HisH of Nitratidesulfovibrio vulgaris (strain DSM 19637 / Miyazaki F) (Desulfovibrio vulgaris).